A 418-amino-acid polypeptide reads, in one-letter code: Imidazolonepropionase (418 aa).

Residues H79 and H81 each contribute to the Fe(3+) site. Residues H79 and H81 each contribute to the Zn(2+) site. Residues R88, Y151, and H184 each contribute to the 4-imidazolone-5-propanoate site. Y151 contributes to the N-formimidoyl-L-glutamate binding site. H249 contacts Fe(3+). H249 provides a ligand contact to Zn(2+). Q252 lines the 4-imidazolone-5-propanoate pocket. D324 contributes to the Fe(3+) binding site. D324 provides a ligand contact to Zn(2+). N-formimidoyl-L-glutamate-binding residues include N326 and G328. T329 contributes to the 4-imidazolone-5-propanoate binding site.

The protein belongs to the metallo-dependent hydrolases superfamily. HutI family. Zn(2+) is required as a cofactor. Requires Fe(3+) as cofactor.

The protein resides in the cytoplasm. It carries out the reaction 4-imidazolone-5-propanoate + H2O = N-formimidoyl-L-glutamate. The protein operates within amino-acid degradation; L-histidine degradation into L-glutamate; N-formimidoyl-L-glutamate from L-histidine: step 3/3. Catalyzes the hydrolytic cleavage of the carbon-nitrogen bond in imidazolone-5-propanoate to yield N-formimidoyl-L-glutamate. It is the third step in the universal histidine degradation pathway. This chain is Imidazolonepropionase, found in Colwellia psychrerythraea (strain 34H / ATCC BAA-681) (Vibrio psychroerythus).